The chain runs to 232 residues: Very-long-chain (3R)-3-hydroxyacyl-CoA dehydratase 4 (232 aa).

Over 1–19 (MGPLALPAWLQPRYRKNAY) the chain is Cytoplasmic. A helical transmembrane segment spans residues 20-40 (LFIYYLIQFCGHSWIFTNMTV). The Lumenal segment spans residues 41–56 (RFFSFGKDSMVDTFYA). A helical transmembrane segment spans residues 57 to 77 (IGLVMRLCQSVSLLELLHIYV). Over 78-112 (GIESNHLLPRFLQLTERIIILFVVITSQEEVQEKY) the chain is Cytoplasmic. Residues 113-133 (VVCVLFVFWNLLDMVRYTYSM) traverse the membrane as a helical segment. At 134–135 (LS) the chain is on the lumenal side. A helical transmembrane segment spans residues 136-156 (VIGISYAVLTWLSQTLWMPIY). Residue tyrosine 156 is part of the active site. Position 157 (proline 157) is a topological domain, cytoplasmic. Residues 158–178 (LCVLAEAFAIYQSLPYFESFG) traverse the membrane as a helical segment. Glutamate 163 is a catalytic residue. The Lumenal portion of the chain corresponds to 179-189 (TYSTKLPFDLS). A helical membrane pass occupies residues 190 to 210 (IYFPYVLKIYLMMLFIGMYFT). Topologically, residues 211-232 (YSHLYSERRDILGIFPIKKKKM) are cytoplasmic.

This sequence belongs to the very long-chain fatty acids dehydratase HACD family. As to quaternary structure, may interact with enzymes of the ELO family (including ELOVL1); with those enzymes that mediate condensation, the first of the four steps of the reaction cycle responsible for fatty acids elongation, may be part of a larger fatty acids elongase complex. As to expression, highly expressed in leukocytes, and low expression in heart, spleen, kidney, and placenta.

The protein resides in the endoplasmic reticulum membrane. The catalysed reaction is a very-long-chain (3R)-3-hydroxyacyl-CoA = a very-long-chain (2E)-enoyl-CoA + H2O. It catalyses the reaction (3R)-hydroxyhexadecanoyl-CoA = (2E)-hexadecenoyl-CoA + H2O. Its pathway is lipid metabolism; fatty acid biosynthesis. In terms of biological role, catalyzes the third of the four reactions of the long-chain fatty acids elongation cycle. This endoplasmic reticulum-bound enzymatic process, allows the addition of two carbons to the chain of long- and very long-chain fatty acids/VLCFAs per cycle. This enzyme catalyzes the dehydration of the 3-hydroxyacyl-CoA intermediate into trans-2,3-enoyl-CoA, within each cycle of fatty acid elongation. Thereby, it participates in the production of VLCFAs of different chain lengths that are involved in multiple biological processes as precursors of membrane lipids and lipid mediators. This is Very-long-chain (3R)-3-hydroxyacyl-CoA dehydratase 4 from Homo sapiens (Human).